A 194-amino-acid polypeptide reads, in one-letter code: 7-methyl-GTP pyrophosphatase (194 aa).

The Proton acceptor role is filled by Asp69.

Belongs to the Maf family. YceF subfamily. Requires a divalent metal cation as cofactor.

The protein resides in the cytoplasm. The enzyme catalyses N(7)-methyl-GTP + H2O = N(7)-methyl-GMP + diphosphate + H(+). Its function is as follows. Nucleoside triphosphate pyrophosphatase that hydrolyzes 7-methyl-GTP (m(7)GTP). May have a dual role in cell division arrest and in preventing the incorporation of modified nucleotides into cellular nucleic acids. This is 7-methyl-GTP pyrophosphatase (yceF1) from Salmonella paratyphi A (strain ATCC 9150 / SARB42).